A 394-amino-acid chain; its full sequence is NAD(P)H-quinone oxidoreductase subunit H (394 aa).

The protein belongs to the complex I 49 kDa subunit family. As to quaternary structure, NDH-1 can be composed of about 15 different subunits; different subcomplexes with different compositions have been identified which probably have different functions.

Its subcellular location is the cellular thylakoid membrane. It catalyses the reaction a plastoquinone + NADH + (n+1) H(+)(in) = a plastoquinol + NAD(+) + n H(+)(out). It carries out the reaction a plastoquinone + NADPH + (n+1) H(+)(in) = a plastoquinol + NADP(+) + n H(+)(out). In terms of biological role, NDH-1 shuttles electrons from an unknown electron donor, via FMN and iron-sulfur (Fe-S) centers, to quinones in the respiratory and/or the photosynthetic chain. The immediate electron acceptor for the enzyme in this species is believed to be plastoquinone. Couples the redox reaction to proton translocation, and thus conserves the redox energy in a proton gradient. Cyanobacterial NDH-1 also plays a role in inorganic carbon-concentration. The sequence is that of NAD(P)H-quinone oxidoreductase subunit H from Prochlorococcus marinus (strain SARG / CCMP1375 / SS120).